Here is a 344-residue protein sequence, read N- to C-terminus: Methionine import ATP-binding protein MetN (344 aa).

An ABC transporter domain is found at 2–241 (IEIRNLSQRF…PHHEVTRALI (240 aa)). 38-45 (GRSGAGKS) is an ATP binding site.

Belongs to the ABC transporter superfamily. Methionine importer (TC 3.A.1.24) family. The complex is composed of two ATP-binding proteins (MetN), two transmembrane proteins (MetI) and a solute-binding protein (MetQ).

Its subcellular location is the cell inner membrane. The enzyme catalyses L-methionine(out) + ATP + H2O = L-methionine(in) + ADP + phosphate + H(+). It catalyses the reaction D-methionine(out) + ATP + H2O = D-methionine(in) + ADP + phosphate + H(+). Functionally, part of the ABC transporter complex MetNIQ involved in methionine import. Responsible for energy coupling to the transport system. The protein is Methionine import ATP-binding protein MetN of Burkholderia thailandensis (strain ATCC 700388 / DSM 13276 / CCUG 48851 / CIP 106301 / E264).